A 397-amino-acid polypeptide reads, in one-letter code: 2-oxoglutarate and iron-dependent oxygenase domain-containing protein ICU11 (397 aa).

The segment at 1–56 is disordered; it reads MCNQTPLRSMALDSSGKQPEQQQQQQPRASSGNGEARLKLRRTPNEEHEPENYEDL. The segment covering 18-27 has biased composition (low complexity); that stretch reads QPEQQQQQQP. One can recognise a Fe2OG dioxygenase domain in the interval 238-339; sequence SLDSHHGYIV…RANLILWCRS (102 aa). Positions 260, 262, and 320 each coordinate Fe cation. Arg-330 is a 2-oxoglutarate binding site.

It depends on Fe(2+) as a cofactor. L-ascorbate serves as cofactor. Expressed in roots, cotyledons, rosette leaves, cauline leaves and inflorescences.

The protein localises to the nucleus. Its subcellular location is the nucleoplasm. In terms of biological role, participates in the epigenetic repression of flowering genes in association with CP2. Functions in the repression of several members of the MADS-box transcription factors family, including SEP3, during vegetative development via histone modification. The polypeptide is 2-oxoglutarate and iron-dependent oxygenase domain-containing protein ICU11 (Arabidopsis thaliana (Mouse-ear cress)).